Reading from the N-terminus, the 396-residue chain is Inositol polyphosphate 1-phosphatase (396 aa).

Asp-54 contacts Li(+). Glu-79 contacts Mg(2+). Glu-80 serves as a coordination point for Li(+). Asp-153 and Ile-155 together coordinate Mg(2+). Residues Asp-156, Ser-157, Thr-158, Ser-264, Lys-266, Gly-286, Ala-287, Lys-290, and Thr-308 each coordinate 1D-myo-inositol 1,4-bisphosphate. Asp-313 is a binding site for Mg(2+). Phosphoserine is present on Ser-314.

Belongs to the inositol monophosphatase superfamily. In terms of assembly, monomer. Mg(2+) serves as cofactor.

It catalyses the reaction 1D-myo-inositol 1,4-bisphosphate + H2O = 1D-myo-inositol 4-phosphate + phosphate. The enzyme catalyses 1D-myo-inositol 1,3,4-trisphosphate + H2O = 1D-myo-inositol 3,4-bisphosphate + phosphate. The protein operates within signal transduction; phosphatidylinositol signaling pathway. Inhibited by Li(+). In terms of biological role, mg(2+)-dependent phosphatase that catalyzes the hydrolysis of the 1-position phosphate from inositol 1,4-bisphosphate and inositol 1,3,4-trisphosphate and participates in inositol phosphate metabolism. The polypeptide is Inositol polyphosphate 1-phosphatase (Mus musculus (Mouse)).